Consider the following 25-residue polypeptide: Fructokinase-1 (25 aa).

Belongs to the ROK (NagC/XylR) family. Homodimer. Requires Mg(2+) as cofactor.

The catalysed reaction is D-fructose + ATP = D-fructose 6-phosphate + ADP + H(+). Its activity is regulated as follows. Inhibition by zinc ions (Potential). Inactivated by EDTA. The sequence is that of Fructokinase-1 from Lactococcus lactis subsp. lactis (Streptococcus lactis).